A 323-amino-acid chain; its full sequence is G patch domain-containing protein 4 (323 aa).

4 disordered regions span residues 1 to 32 (MSAS…GLGR), 84 to 110 (GVKV…SNRN), 124 to 185 (PGGE…SAKL), and 197 to 323 (AKYG…NKSE). 2 stretches are compositionally biased toward basic and acidic residues: residues 9-32 (SQGR…GLGR) and 84-94 (GVKVNRTKDDD). The region spanning 11 to 57 (GRRFAEQQMHKHGWTEGKGLGRRENGISEAIKVKVKCDHAGVGHNSA) is the G-patch domain. A compositionally biased stretch (low complexity) spans 131–141 (KEPSSSESSDS). Acidic residues predominate over residues 252–261 (EREEEEEEES). The segment covering 281–291 (SKKKKSKKKHR) has biased composition (basic residues). Over residues 294–306 (SASPQEEQVTEST) the composition is skewed to polar residues. Positions 311–323 (KPKKKKKKKNKSE) are enriched in basic residues.

This is G patch domain-containing protein 4 (gpatch4) from Xenopus tropicalis (Western clawed frog).